The following is a 309-amino-acid chain: 5-oxoprolinase subunit C (309 aa).

Belongs to the PxpC family. In terms of assembly, forms a complex composed of PxpA, PxpB and PxpC.

The enzyme catalyses 5-oxo-L-proline + ATP + 2 H2O = L-glutamate + ADP + phosphate + H(+). Its function is as follows. Catalyzes the cleavage of 5-oxoproline to form L-glutamate coupled to the hydrolysis of ATP to ADP and inorganic phosphate. The protein is 5-oxoprolinase subunit C of Haemophilus influenzae (strain ATCC 51907 / DSM 11121 / KW20 / Rd).